Reading from the N-terminus, the 419-residue chain is E3 ubiquitin-protein ligase pellino homolog 2 (419 aa).

Positions 15-202 (EPVKYRELVV…HPQGGFTEES (188 aa)) constitute an FHA; atypical domain.

The protein belongs to the pellino family. Interacts with TRAF6, IRAK4 and MAP3K7. Interacts with IRAK1. Interacts with BCL10; this interaction is impaired by SOCS3. In terms of processing, phosphorylated by IRAK1 and IRAK4 enhancing its E3 ligase activity. As to expression, widely expressed both in embryos and adult. Weakly or not expressed in spleen and thymus.

The enzyme catalyses S-ubiquitinyl-[E2 ubiquitin-conjugating enzyme]-L-cysteine + [acceptor protein]-L-lysine = [E2 ubiquitin-conjugating enzyme]-L-cysteine + N(6)-ubiquitinyl-[acceptor protein]-L-lysine.. The protein operates within protein modification; protein ubiquitination. Functionally, E3 ubiquitin ligase catalyzing the covalent attachment of ubiquitin moieties onto substrate proteins. Involved in the TLR and IL-1 signaling pathways via interaction with the complex containing IRAK kinases and TRAF6. Mediates IL1B-induced IRAK1 'Lys-63'-linked polyubiquitination and possibly 'Lys-48'-linked ubiquitination. May be important for LPS- and IL1B-induced MAP3K7-dependent, but not MAP3K3-dependent, NF-kappa-B activation. Can activate the MAP (mitogen activated protein) kinase pathway leading to activation of ELK1. In Mus musculus (Mouse), this protein is E3 ubiquitin-protein ligase pellino homolog 2 (Peli2).